Consider the following 193-residue polypeptide: Ion-translocating oxidoreductase complex subunit A (193 aa).

A run of 6 helical transmembrane segments spans residues 5–25 (LLLL…FLGL), 39–59 (IGMS…SYLV), 72–92 (LTTM…EMVV), 102–122 (LLGI…VALL), 134–154 (IIYG…FSAM), and 171–191 (AIAM…TGLV).

Belongs to the NqrDE/RnfAE family. In terms of assembly, the complex is composed of six subunits: RnfA, RnfB, RnfC, RnfD, RnfE and RnfG.

The protein resides in the cell inner membrane. Part of a membrane-bound complex that couples electron transfer with translocation of ions across the membrane. The chain is Ion-translocating oxidoreductase complex subunit A from Colwellia psychrerythraea (strain 34H / ATCC BAA-681) (Vibrio psychroerythus).